A 44-amino-acid polypeptide reads, in one-letter code: uncharacterized protein (44 aa).

Residues 6–26 (SILIRGGGGVLIVLILLLWIV) traverse the membrane as a helical segment.

It is found in the membrane. This is an uncharacterized protein from Ornithodoros (relapsing fever ticks).